A 291-amino-acid chain; its full sequence is MRDYVLRATSGNGQVRAFVATTRNTVEEARRLHETTKVATAALGRTLTATSIMGLMMKNDSDKLTVIIKGGGPIGTIIATSDSKGMVKGYVGNPQVEVEDYPNGKLNVAAAVGTEGVVKVIKDLGLREPYNGTYPLVSGEIAEDFTYYFAVSEQTPSVVALGVLTKEDEVEFAGGFIVQLMPDAEEETIAKLEENVAKLPSITNMLKEGKSPEDILNIVLDGLEPKILDTCEVGFMCECSKERVKTALVAIGKKSLAQIIEEDKKAEVGCQFCNKKYMYSEEELLEILKEM.

Intrachain disulfides connect Cys-237–Cys-239 and Cys-270–Cys-273.

Belongs to the HSP33 family. Post-translationally, under oxidizing conditions two disulfide bonds are formed involving the reactive cysteines. Under reducing conditions zinc is bound to the reactive cysteines and the protein is inactive.

It localises to the cytoplasm. Its function is as follows. Redox regulated molecular chaperone. Protects both thermally unfolding and oxidatively damaged proteins from irreversible aggregation. Plays an important role in the bacterial defense system toward oxidative stress. This chain is 33 kDa chaperonin, found in Clostridioides difficile (strain 630) (Peptoclostridium difficile).